The chain runs to 306 residues: Low-density lipoprotein receptor class A domain-containing protein 4 (306 aa).

The Lumenal portion of the chain corresponds to 1-64 (MPEAGFQATN…PPGIFNSELE (64 aa)). The region spanning 11–48 (AFTECKFTCTSGKCLYLGSLVCNQQNDCGDNSDEENCL) is the LDL-receptor class A domain. 2 disulfide bridges follow: cysteine 19/cysteine 38 and cysteine 32/cysteine 47. Residues 65 to 85 (FAQILIIVVVVTVMVVVVVCL) traverse the membrane as a helical segment. At 86 to 306 (LNHYKVSTRS…GKDRKPGDLV (221 aa)) the chain is on the cytoplasmic side. Residues 100 to 127 (PNQSQRQEDGLQPEGSLWPSDSSVQRPG) are disordered. The PPxY motif 1 motif lies at 180–183 (PPPY). Residues 208–211 (PPNR) carry the SMAD interaction motif (SIM) motif. Positions 252-255 (PPTY) match the PPxY motif 2 motif. Positions 268–306 (FHHQHSNTHRGSRPQFQPNNSEGTIVPIKGKDRKPGDLV) are disordered. Residues 269 to 279 (HHQHSNTHRGS) are compositionally biased toward basic residues. The span at 281–290 (PQFQPNNSEG) shows a compositional bias: polar residues. Residues 296–306 (KGKDRKPGDLV) show a composition bias toward basic and acidic residues.

Belongs to the PMEPA1 family. In terms of assembly, interacts with PMEPA1. Interacts (via the SMAD interaction motif) with SMAD2 and SMAD3. Detected in all tissues tested.

The protein resides in the early endosome membrane. Functionally, functions as a negative regulator of TGF-beta signaling and thereby probably plays a role in cell proliferation, differentiation, apoptosis, motility, extracellular matrix production and immunosuppression. In the canonical TGF-beta pathway, ZFYVE9/SARA recruits the intracellular signal transducer and transcriptional modulators SMAD2 and SMAD3 to the TGF-beta receptor. Phosphorylated by the receptor, SMAD2 and SMAD3 then form a heteromeric complex with SMAD4 that translocates to the nucleus to regulate transcription. Through interaction with SMAD2 and SMAD3, LDLRAD4 may compete with ZFYVE9 and SMAD4 and prevent propagation of the intracellular signal. This is Low-density lipoprotein receptor class A domain-containing protein 4 (Ldlrad4) from Mus musculus (Mouse).